Here is a 318-residue protein sequence, read N- to C-terminus: Transaldolase (318 aa).

K126 functions as the Schiff-base intermediate with substrate in the catalytic mechanism.

Belongs to the transaldolase family. Type 1 subfamily. As to quaternary structure, homodimer.

Its subcellular location is the cytoplasm. It carries out the reaction D-sedoheptulose 7-phosphate + D-glyceraldehyde 3-phosphate = D-erythrose 4-phosphate + beta-D-fructose 6-phosphate. It participates in carbohydrate degradation; pentose phosphate pathway; D-glyceraldehyde 3-phosphate and beta-D-fructose 6-phosphate from D-ribose 5-phosphate and D-xylulose 5-phosphate (non-oxidative stage): step 2/3. Functionally, transaldolase is important for the balance of metabolites in the pentose-phosphate pathway. This chain is Transaldolase, found in Cupriavidus metallidurans (strain ATCC 43123 / DSM 2839 / NBRC 102507 / CH34) (Ralstonia metallidurans).